The following is an 851-amino-acid chain: MPKNSHHHRSSSVNSTKSRSTESTNKWKIPHYYRRSASGSTQASPDRNSSTGSCSTPVLPTMNVMSSPKKVLLEDPRDNHTKAKKSSRKKSGEMVFVNYTVQDTANENDTDLQTQPVSVPAPKAKLKKKSSKRRMLKIFGSSKNEHIEDIVEEQPMVLQMDSESKPLSGTPISESGIDASSLTTKRSYNSFLKHNRLNGKTPFSGNLSFPSLNMMGNTTDLPIDNNDFCSEKEVVPKSTHDPSLAKPPSRFTESETNSTPNLSSIPLMNTKNTRLKYNKVAPQSSDRQKSQESGLYHSTESFNFKDQNYSNNKSSLSLNSDLSTPHFAKHSPDSPRTSRSFNCGDSQSKVKLPEENDASIAFSKMFTRKRANTGGSTCSLASPTIAQTIQQSNIKVNKLPTQRTTSVGSLSSMSNRYSPIRVASPGRARSATRGSSLYRLSRDLNSLPSVTDLPEMDSTTPVNEIFLDGQPQHKSGSVKGGHRKKQESISDAQRIQHSNSYITTPSSSLVTPPYYMTGYTLPSSASASSTPNVLETHNMNFVPSTSTVTSYRPSSNFSSFDKEYSNENDASGEFSAFNTPMENIPALKGIPRSTLEENEEEDVLVQDIPNTAHFQRRDIMGMDTHRKDDSLDFNSLMPHGSTTSSSIVDSVMTNSISTTTSNATGNYFQDQDKYTLVNTGLGLSDANLDHFIRSQWKHASRSESNNNTGNRVSYSGSTPNNVDTTKTNLQVYTEFDFENPESFFHEQSKLLGEMGHSNNNSNSAINMNEPKSADTYIGNISPDTSATVSLGDLMGSNVSNNSERNFYDGHTFVPQYQANSSVENSNNQNAAPIANNDIDNNLQSFYFDNSN.

Basic residues predominate over residues 1–10 (MPKNSHHHRS). Disordered stretches follow at residues 1–91 (MPKN…RKKS), 233–271 (EVVP…MNTK), 315–355 (SLSL…LPEE), 466–504 (FLDG…YITT), and 698–722 (HASR…PNNV). A compositionally biased stretch (low complexity) spans 11–23 (SSVNSTKSRSTES). Residues 37-66 (ASGSTQASPDRNSSTGSCSTPVLPTMNVMS) are compositionally biased toward polar residues. A compositionally biased stretch (basic and acidic residues) spans 71-81 (VLLEDPRDNHT). Composition is skewed to polar residues over residues 254 to 271 (SETN…MNTK), 334 to 349 (SPRT…SQSK), 489 to 504 (ISDA…YITT), and 702 to 722 (SESN…PNNV). Position 334 is a phosphoserine (Ser-334). Phosphoserine is present on residues Ser-757 and Ser-761.

Its function is as follows. Dosage dependent suppressor of PKC1 deletion and MPK1 deletion. Involved in cell lysis. The protein is Protein BCK2 (BCK2) of Saccharomyces cerevisiae (strain ATCC 204508 / S288c) (Baker's yeast).